The sequence spans 331 residues: Phosphate acyltransferase (331 aa).

It belongs to the PlsX family. As to quaternary structure, homodimer. Probably interacts with PlsY.

The protein resides in the cytoplasm. It catalyses the reaction a fatty acyl-[ACP] + phosphate = an acyl phosphate + holo-[ACP]. It functions in the pathway lipid metabolism; phospholipid metabolism. In terms of biological role, catalyzes the reversible formation of acyl-phosphate (acyl-PO(4)) from acyl-[acyl-carrier-protein] (acyl-ACP). This enzyme utilizes acyl-ACP as fatty acyl donor, but not acyl-CoA. This is Phosphate acyltransferase from Ureaplasma parvum serovar 3 (strain ATCC 27815 / 27 / NCTC 11736).